The primary structure comprises 361 residues: Chorismate synthase (361 aa).

NADP(+) contacts are provided by R48 and R54. Residues R125–S127, N238–A239, G278, K293–S297, and R319 each bind FMN.

The protein belongs to the chorismate synthase family. In terms of assembly, homotetramer. FMNH2 serves as cofactor.

The enzyme catalyses 5-O-(1-carboxyvinyl)-3-phosphoshikimate = chorismate + phosphate. Its pathway is metabolic intermediate biosynthesis; chorismate biosynthesis; chorismate from D-erythrose 4-phosphate and phosphoenolpyruvate: step 7/7. Its function is as follows. Catalyzes the anti-1,4-elimination of the C-3 phosphate and the C-6 proR hydrogen from 5-enolpyruvylshikimate-3-phosphate (EPSP) to yield chorismate, which is the branch point compound that serves as the starting substrate for the three terminal pathways of aromatic amino acid biosynthesis. This reaction introduces a second double bond into the aromatic ring system. This Shigella flexneri serotype 5b (strain 8401) protein is Chorismate synthase.